The chain runs to 147 residues: Hemoglobin larval subunit beta-1 (147 aa).

The Globin domain occupies 3 to 147 (HLSADEKSAI…LVAALSHGYF (145 aa)). Residues histidine 64 and histidine 93 each contribute to the heme b site.

This sequence belongs to the globin family. As to quaternary structure, heterotetramer of two alpha chains and two beta chains. In terms of tissue distribution, red blood cells.

This is a larval (tadpole) beta-globin. The chain is Hemoglobin larval subunit beta-1 from Xenopus laevis (African clawed frog).